The sequence spans 184 residues: LPS-assembly lipoprotein LptE (184 aa).

Residues 1 to 19 (MRHRLFTLVLGLAVLITAG) form the signal peptide. The N-palmitoyl cysteine moiety is linked to residue C20. The S-diacylglycerol cysteine moiety is linked to residue C20.

It belongs to the LptE lipoprotein family. In terms of assembly, component of the lipopolysaccharide transport and assembly complex. Interacts with LptD.

The protein localises to the cell outer membrane. Together with LptD, is involved in the assembly of lipopolysaccharide (LPS) at the surface of the outer membrane. Required for the proper assembly of LptD. Binds LPS and may serve as the LPS recognition site at the outer membrane. The polypeptide is LPS-assembly lipoprotein LptE (Pectobacterium atrosepticum (strain SCRI 1043 / ATCC BAA-672) (Erwinia carotovora subsp. atroseptica)).